The primary structure comprises 277 residues: Short chain dehydrogenase penD (277 aa).

3 residues coordinate NADP(+): Ile-28, Asp-76, and Asn-105. Residues Ser-158 and Ser-159 each act as proton donor in the active site. 3 residues coordinate NADP(+): Tyr-173, Lys-177, and Thr-209. The active-site Proton acceptor is the Tyr-173. Lys-177 serves as the catalytic Lowers pKa of active site Tyr.

The protein belongs to the short-chain dehydrogenases/reductases (SDR) family.

The catalysed reaction is yaequinolone D + NADPH + H(+) = penigequinolone A + NADP(+) + H2O. It catalyses the reaction yaequinolone D + NADPH + H(+) = penigequinolone B + NADP(+) + H2O. It participates in secondary metabolite biosynthesis. It functions in the pathway alkaloid biosynthesis. Its pathway is mycotoxin biosynthesis. Short chain dehydrogenase; part of the gene cluster that mediates the biosynthesis of penigequinolones, potent insecticidal alkaloids that contain a highly modified 10-carbon prenyl group. The first stage is catalyzed by the nonribosomal peptide synthetase penN that condenses anthranilic acid and O-methyl-L-tyrosine to produce 4'-methoxycyclopeptin. 4'-methoxycyclopeptin is then converted to 4'-methoxydehydrocyclopeptin by the ketoglutarate-dependent dioxygenase penM through dehydrogenation to form a double bond between C-alpha and C-beta of the O-methyltyrosine side chain. PenM also converts its first product methoxydehydrocyclopeptin to 4'-methoxycyclopenin. The following conversion of 4'methoxycyclopenin into 4'-methoxyviridicatin is catalyzed by the cyclopenase penL. 4'-methoxyviridicatin is the precursor of quinolone natural products, and is further converted to quinolinone B. The prenyltransferase penI then catalyzes the canonical Friedel-Crafts alkylation of quinolinone B with dimethylallyl cation to yield dimethylallyl quinolone, which is subjected to FAD-dependent dehydrogenation by the FAD-linked oxidoreductase penH to yield conjugated aryl diene. The delta(3') double bond then serves as the site of the second alkylation with DMAPP catalyzed by the prenyltransferase penG to yield a carbenium ion intermediate, which can be attacked by H(2)O to yield a styrenyl quinolone containing a C3'-hydroxyprenyl chain, or undergo cyclization to yield yaequinolones J1 and J2. The conversion of the styrenyl quinolone into the tetrahydrofuran-containing yaequinolone C is performed by the FAD-dependent monooxygenase penE and involves epoxidation of the terminal C7'-C8' olefin, followed by epoxide ring opening initiated by the C3' hydroxyl group. The predicted cysteine hydrolase penJ acts as an epoxide hydrolase that enhances the rate of the 5-exo-tet cyclization step, increasing the yield of yaequinolone C. PenF catalyzes the cationic rearrangement of the epoxide formed by penE (before ring opening to produce yaequinolone C) into yaequinolone D. Finally, the short-chain dehydrogenase/reductase (SDR)-like reductase penD, catalyzes both the dehydration of yaequinolone D and the reduction of the resulting oxonium to yield penigequinolone. The chain is Short chain dehydrogenase penD from Penicillium thymicola.